Reading from the N-terminus, the 1259-residue chain is Translocation and assembly module subunit TamB (1259 aa).

Methionine 1 carries the post-translational modification N-formylmethionine. Over 1–6 (MSLWKK) the chain is Cytoplasmic. Residues 7-27 (ISLGVVIVILLLLGSVAFLVG) form a helical; Signal-anchor for type II membrane protein membrane-spanning segment. The Periplasmic portion of the chain corresponds to 28-1259 (TTSGLHLVFK…ALDLLYQFEF (1232 aa)).

This sequence belongs to the TamB family. In terms of assembly, interacts with TamA to form the translocation and assembly module (TAM).

It is found in the cell inner membrane. Functionally, component of the translocation and assembly module (TAM), which facilitates the insertion and assembly of specific beta-barrel proteins into the outer membrane. Promotes the assembly and secretion across the outer membrane of a subset of autotransporters, such as Ag43. Involved in the assembly of the outer membrane usher protein FimD. In vitro, when TAM is reconstituted into preformed liposomes, it can promote the assembly of several outer membrane proteins, including OmpA, EspP, Ag43 and FadL. TamA is sufficient to catalyze a low level of outer membrane protein (OMP) assembly, but both TamA and TamB are required for efficient OMP assembly. TamB may regulate TamA activity. It could regulate conformational changes in TamA to drive its function in OMP assembly. It could also act as a chaperone that facilitate the transport of nascent membrane proteins across the periplasm to TamA in the outer membrane. In terms of biological role, in addition, is involved in outer membrane lipid homeostasis. Likely transports phospholipids between the inner membrane and the outer membrane. It would provide a bridge-like structure that protects phospholipids as they travel across the periplasm. One possible explanation for the apparent dual function of TAM is that TamB is a somewhat generic transporter of hydrophobic molecules. TamB, YdbH and YhdP are redundant, but not equivalent, in performing an essential function for growth and maintaining lipid homeostasis in the outer membrane. The transport functions of TamB and YhdP could be differentiated according to the fatty acid saturation state of the phospholipids, with TamB transporting more unsaturated phospholipids and YhdP more saturated phospholipids. Any of these three proteins is sufficient for growth. This is Translocation and assembly module subunit TamB from Escherichia coli (strain K12).